The following is a 617-amino-acid chain: Proline--tRNA ligase (617 aa).

It belongs to the class-II aminoacyl-tRNA synthetase family. ProS type 1 subfamily. In terms of assembly, homodimer.

It localises to the cytoplasm. The enzyme catalyses tRNA(Pro) + L-proline + ATP = L-prolyl-tRNA(Pro) + AMP + diphosphate. Catalyzes the attachment of proline to tRNA(Pro) in a two-step reaction: proline is first activated by ATP to form Pro-AMP and then transferred to the acceptor end of tRNA(Pro). As ProRS can inadvertently accommodate and process non-cognate amino acids such as alanine and cysteine, to avoid such errors it has two additional distinct editing activities against alanine. One activity is designated as 'pretransfer' editing and involves the tRNA(Pro)-independent hydrolysis of activated Ala-AMP. The other activity is designated 'posttransfer' editing and involves deacylation of mischarged Ala-tRNA(Pro). The misacylated Cys-tRNA(Pro) is not edited by ProRS. The protein is Proline--tRNA ligase of Streptococcus pneumoniae serotype 4 (strain ATCC BAA-334 / TIGR4).